Consider the following 382-residue polypeptide: MSTWLLPENIADVLPSEARKIEELRRRLLDRFRSYGYEMVMPPLLEYLESLLTSGGNELRLRTFKLVDQVSGRTLGLRADMTPQVARIDAHLLNRQGVTRLCYAGPVLHTRPRGLHASREQLQIGAEIYGHAGLEADQEIQQLMLDALHLTGLKKIRLDLCHAGVLAALFARDAAAAERGEALYEALAGKDVPRLNELTDDLGADTRAALRALPRLYGDASVLDDARRQLPALPEIARALDDLAHLAAQVKDAEVAIDLADLRGYAYHSGAMFAAYVDGVPNAVAHGGRYDHVGQAYGRARPATGFSLDLREIARISPVEARGAAILAPWKQDDALRAAVGALRDAGEVVIQALPGHDHVLDEFACDRALVERDGAWVIEPR.

It belongs to the class-II aminoacyl-tRNA synthetase family. HisZ subfamily. In terms of assembly, heteromultimer composed of HisG and HisZ subunits.

The protein resides in the cytoplasm. It participates in amino-acid biosynthesis; L-histidine biosynthesis; L-histidine from 5-phospho-alpha-D-ribose 1-diphosphate: step 1/9. Required for the first step of histidine biosynthesis. May allow the feedback regulation of ATP phosphoribosyltransferase activity by histidine. The protein is ATP phosphoribosyltransferase regulatory subunit of Burkholderia pseudomallei (strain 668).